We begin with the raw amino-acid sequence, 254 residues long: Urease accessory protein UreF (254 aa).

Over residues 1–11 (MDKGKSVKSTE) the composition is skewed to basic and acidic residues. The interval 1 to 25 (MDKGKSVKSTEKSVGIPPKTPKTDN) is disordered.

This sequence belongs to the UreF family. As to quaternary structure, ureH, UreF and UreG form a complex that acts as a GTP-hydrolysis-dependent molecular chaperone, activating the urease apoprotein by helping to assemble the nickel containing metallocenter of UreC. The UreE protein probably delivers the nickel.

The protein resides in the cytoplasm. Its function is as follows. Required for maturation of urease via the functional incorporation of the urease nickel metallocenter. This is Urease accessory protein UreF from Helicobacter pylori (strain P12).